A 411-amino-acid chain; its full sequence is 2,3-bisphosphoglycerate-independent phosphoglycerate mutase (411 aa).

The protein belongs to the BPG-independent phosphoglycerate mutase family. A-PGAM subfamily.

It carries out the reaction (2R)-2-phosphoglycerate = (2R)-3-phosphoglycerate. Its pathway is carbohydrate degradation; glycolysis; pyruvate from D-glyceraldehyde 3-phosphate: step 3/5. In terms of biological role, catalyzes the interconversion of 2-phosphoglycerate and 3-phosphoglycerate. The sequence is that of 2,3-bisphosphoglycerate-independent phosphoglycerate mutase from Thermococcus kodakarensis (strain ATCC BAA-918 / JCM 12380 / KOD1) (Pyrococcus kodakaraensis (strain KOD1)).